Reading from the N-terminus, the 244-residue chain is Phosphoadenosine 5'-phosphosulfate reductase (244 aa).

Residue Cys239 is the Nucleophile; cysteine thiosulfonate intermediate of the active site.

This sequence belongs to the PAPS reductase family. CysH subfamily.

Its subcellular location is the cytoplasm. The enzyme catalyses [thioredoxin]-disulfide + sulfite + adenosine 3',5'-bisphosphate + 2 H(+) = [thioredoxin]-dithiol + 3'-phosphoadenylyl sulfate. It functions in the pathway sulfur metabolism; hydrogen sulfide biosynthesis; sulfite from sulfate: step 3/3. Catalyzes the formation of sulfite from phosphoadenosine 5'-phosphosulfate (PAPS) using thioredoxin as an electron donor. This chain is Phosphoadenosine 5'-phosphosulfate reductase, found in Salmonella paratyphi A (strain AKU_12601).